The following is a 443-amino-acid chain: D-serine dehydratase (443 aa).

K118 bears the N6-(pyridoxal phosphate)lysine mark.

It belongs to the serine/threonine dehydratase family. DsdA subfamily. Monomer. The cofactor is pyridoxal 5'-phosphate.

The catalysed reaction is D-serine = pyruvate + NH4(+). The sequence is that of D-serine dehydratase from Photorhabdus laumondii subsp. laumondii (strain DSM 15139 / CIP 105565 / TT01) (Photorhabdus luminescens subsp. laumondii).